The following is a 353-amino-acid chain: Soluble interferon alpha/beta receptor OPG204 (353 aa).

The N-terminal stretch at 1 to 21 (MTMKMMVHIYFVSLSLLLLLF) is a signal peptide. 2 consecutive Ig-like C2-type domains span residues 67–139 (LGEP…KNGD) and 157–239 (PKTY…IVVS). 2 disulfides stabilise this stretch: cysteine 75-cysteine 131 and cysteine 174-cysteine 223. N-linked (GlcNAc...) asparagine; by host glycans are attached at residues asparagine 119, asparagine 184, asparagine 263, asparagine 271, and asparagine 323. An Ig-like V-type domain is found at 248 to 347 (PSQDHRFKLI…HNYYFEKTLT (100 aa)). An intrachain disulfide couples cysteine 274 to cysteine 335.

It belongs to the interleukin-1 receptor family. Interacts with host IFNA1.

It is found in the secreted. Functionally, counteracts the antiviral effects of host IFN-alpha/beta and key IFN-inducible proteins involved in viral RNA degradation suxh as host OAS1. Acts as a soluble IFN-alpha receptor and thus inhibits the interaction between host IFN-alpha and its receptor. The polypeptide is Soluble interferon alpha/beta receptor OPG204 (OPG204) (Homo sapiens (Human)).